A 710-amino-acid polypeptide reads, in one-letter code: Interleukin-1 receptor-associated kinase 1 (710 aa).

In terms of domain architecture, Death spans 27–106 (MCRFYKVMDA…DIITAWHPPA (80 aa)). Residue threonine 66 is modified to Phosphothreonine; by PKC/PRKCI. A disordered region spans residues 107–133 (PVVPPSTAAPRPSSISAGSEAGDWSPR). Positions 110–211 (PPSTAAPRPS…FCEISQGTCN (102 aa)) are proST region. The segment covering 111–123 (PSTAAPRPSSISA) has biased composition (low complexity). Residue serine 131 is modified to Phosphoserine. Residues lysine 134 and lysine 180 each participate in a glycyl lysine isopeptide (Lys-Gly) (interchain with G-Cter in ubiquitin) cross-link. Residues 169-190 (PPLPSSAPSSTKSSPESPVSGL) are disordered. Over residues 174 to 188 (SAPSSTKSSPESPVS) the composition is skewed to low complexity. A Phosphothreonine; by IRAK4 modification is found at threonine 209. The Protein kinase domain occupies 212–521 (FSEELRIGEG…TQVYKRLEGL (310 aa)). ATP contacts are provided by residues 218-226 (IGEGGFGCV) and lysine 239. Catalysis depends on aspartate 340, which acts as the Proton acceptor. ATP is bound by residues 342–345 (KSSN) and aspartate 358. The residue at position 375 (serine 375) is a Phosphoserine. Position 387 is a phosphothreonine (threonine 387). Disordered regions lie at residues 527 to 655 (WELE…SEPP) and 689 to 710 (FPGL…EFQS). The segment covering 537-553 (PSPQENSYMSTTGSAQS) has biased composition (polar residues). Serine 553 is subject to Phosphoserine. Low complexity predominate over residues 567-576 (APAQAAQQLQ). Over residues 616–639 (SCTQGGTTRESSVRSSPGFQPTTM) the composition is skewed to polar residues. A compositionally biased stretch (low complexity) spans 640-654 (EGSPTGSSSLLSSEP).

It belongs to the protein kinase superfamily. TKL Ser/Thr protein kinase family. Pelle subfamily. As to quaternary structure, homodimer. Forms a complex with TRAF6, PELI1, IRAK4 and MYD88. Direct binding of SMAD6 to PELI1 prevents complex formation and hence negatively regulates IL1R-TLR signaling and eventually NF-kappa-B-mediated gene expression. The TRAF6-PELI1-IRAK4-MYD88 complex recruits MAP3K7/TAK1, TAB1 and TAB2 to mediate NF-kappa-B activation. Interaction with MYD88 recruits IRAK1 to the stimulated receptor complex. Interacts with TOLLIP; this interaction occurs in the cytosol prior to receptor activation. Interacts with IL1RL1. Interacts (when polyubiquitinated) with IKBKG/NEMO. Interacts with RSAD2/viperin. Interacts with IRAK1BP1. Interacts with PELI2. Interacts with ZC3H12A; this interaction increases the interaction between ZC3H12A and IKBKB/IKKB. Interacts with IRAK4. Interacts with PELI3. Interacts with PELI1 and TRAF6. Interacts with INAVA; the interaction takes place upon PRR stimulation. Interacts (via C-terminus) with NFATC4 (via N-terminus). Mg(2+) serves as cofactor. Following recruitment on the activated receptor complex, phosphorylated on Thr-209, probably by IRAK4, resulting in a conformational change of the kinase domain, allowing further phosphorylations to take place. Thr-387 phosphorylation in the activation loop is required to achieve full enzymatic activity. Post-translationally, polyubiquitinated by TRAF6 after cell stimulation with IL-1-beta by PELI1, PELI2 and PELI3. Polyubiquitination occurs with polyubiquitin chains linked through 'Lys-63'. Ubiquitination promotes interaction with NEMO/IKBKG. Also sumoylated; leading to nuclear translocation. In terms of tissue distribution, highly expressed in liver, followed by kidney and skeletal muscle.

It localises to the cytoplasm. The protein localises to the nucleus. The protein resides in the lipid droplet. The catalysed reaction is L-seryl-[protein] + ATP = O-phospho-L-seryl-[protein] + ADP + H(+). It carries out the reaction L-threonyl-[protein] + ATP = O-phospho-L-threonyl-[protein] + ADP + H(+). Functionally, serine/threonine-protein kinase that plays a critical role in initiating innate immune response against foreign pathogens. Involved in Toll-like receptor (TLR) and IL-1R signaling pathways. Is rapidly recruited by MYD88 to the receptor-signaling complex upon TLR activation. Association with MYD88 leads to IRAK1 phosphorylation by IRAK4 and subsequent autophosphorylation and kinase activation. Phosphorylates E3 ubiquitin ligases Pellino proteins (PELI1, PELI2 and PELI3) to promote pellino-mediated polyubiquitination of IRAK1. Then, the ubiquitin-binding domain of IKBKG/NEMO binds to polyubiquitinated IRAK1 bringing together the IRAK1-MAP3K7/TAK1-TRAF6 complex and the NEMO-IKKA-IKKB complex. In turn, MAP3K7/TAK1 activates IKKs (CHUK/IKKA and IKBKB/IKKB) leading to NF-kappa-B nuclear translocation and activation. Alternatively, phosphorylates TIRAP to promote its ubiquitination and subsequent degradation. Phosphorylates the interferon regulatory factor 7 (IRF7) to induce its activation and translocation to the nucleus, resulting in transcriptional activation of type I IFN genes, which drive the cell in an antiviral state. When sumoylated, translocates to the nucleus and phosphorylates STAT3. The protein is Interleukin-1 receptor-associated kinase 1 (Irak1) of Mus musculus (Mouse).